The sequence spans 1036 residues: Protein CLEC16A (1036 aa).

In terms of domain architecture, FPL spans 51–198; it reads IRSITEILIW…AVRTITLNVY (148 aa). 4 disordered regions span residues 375–416, 437–458, 876–967, and 1008–1036; these read SLEM…DAEK, GTSV…NSEN, HSSP…PSLL, and SQLP…PTEH. A compositionally biased stretch (basic residues) spans 381 to 392; the sequence is HKGKKRMQKRPN. 3 stretches are compositionally biased toward low complexity: residues 877 to 891, 898 to 923, and 943 to 954; these read SSPS…FASG, STSH…APTT, and NSKPSKNSSARS.

Belongs to the CLEC16A/gop-1 family. Interacts with RNF41/NRDP1. In terms of tissue distribution, ubiquitously expressed. Expressed in pancreatic islets.

Its subcellular location is the endosome membrane. The protein localises to the lysosome membrane. In terms of biological role, regulator of mitophagy through the upstream regulation of the RNF41/NRDP1-PRKN pathway. Mitophagy is a selective form of autophagy necessary for mitochondrial quality control. The RNF41/NRDP1-PRKN pathway regulates autophagosome-lysosome fusion during late mitophagy. May protect RNF41/NRDP1 from proteasomal degradation, RNF41/NRDP1 which regulates proteasomal degradation of PRKN. Plays a key role in beta cells functions by regulating mitophagy/autophagy and mitochondrial health. This Mus musculus (Mouse) protein is Protein CLEC16A.